The following is a 459-amino-acid chain: Argininosuccinate lyase (459 aa).

Belongs to the lyase 1 family. Argininosuccinate lyase subfamily.

It is found in the cytoplasm. The catalysed reaction is 2-(N(omega)-L-arginino)succinate = fumarate + L-arginine. The protein operates within amino-acid biosynthesis; L-arginine biosynthesis; L-arginine from L-ornithine and carbamoyl phosphate: step 3/3. The sequence is that of Argininosuccinate lyase from Photorhabdus laumondii subsp. laumondii (strain DSM 15139 / CIP 105565 / TT01) (Photorhabdus luminescens subsp. laumondii).